The chain runs to 315 residues: Methionyl-tRNA formyltransferase (315 aa).

110 to 113 (SLLP) is a binding site for (6S)-5,6,7,8-tetrahydrofolate.

This sequence belongs to the Fmt family.

The catalysed reaction is L-methionyl-tRNA(fMet) + (6R)-10-formyltetrahydrofolate = N-formyl-L-methionyl-tRNA(fMet) + (6S)-5,6,7,8-tetrahydrofolate + H(+). Attaches a formyl group to the free amino group of methionyl-tRNA(fMet). The formyl group appears to play a dual role in the initiator identity of N-formylmethionyl-tRNA by promoting its recognition by IF2 and preventing the misappropriation of this tRNA by the elongation apparatus. In Lactobacillus delbrueckii subsp. bulgaricus (strain ATCC BAA-365 / Lb-18), this protein is Methionyl-tRNA formyltransferase.